The sequence spans 402 residues: Cholinephosphotransferase 1 (402 aa).

Residues M1–A62 are Cytoplasmic-facing. A helical transmembrane segment spans residues P63–C83. N64 contributes to the CDP-choline binding site. Residues Y84–P93 lie on the Lumenal side of the membrane. A helical membrane pass occupies residues F94–A118. Mg(2+) contacts are provided by D111 and D114. Residue R119 coordinates CDP-choline. Residues R119–S125 are Cytoplasmic-facing. A helical transmembrane segment spans residues P126–A150. D132 lines the Mg(2+) pocket. H133 serves as the catalytic Proton acceptor. Residue D136 participates in Mg(2+) binding. Topologically, residues V151–M160 are lumenal. Residues F161–Y179 traverse the membrane as a helical segment. The Cytoplasmic portion of the chain corresponds to V180–D190. A helical transmembrane segment spans residues V191–V207. Residues C208 to L222 are Lumenal-facing. A helical membrane pass occupies residues P223–L248. Residues S249 to L265 are Cytoplasmic-facing. A helical transmembrane segment spans residues S266–I281. Over Y282 to N293 the chain is Lumenal. Residues P294–H316 traverse the membrane as a helical segment. Topologically, residues M317–F329 are cytoplasmic. A helical membrane pass occupies residues I330 to Q339. Residues Y340–D346 are Lumenal-facing. The helical transmembrane segment at E347–H376 threads the bilayer. Residues L377–D402 lie on the Cytoplasmic side of the membrane.

Belongs to the CDP-alcohol phosphatidyltransferase class-I family. In terms of assembly, homodimer. The cofactor is Mg(2+). Mn(2+) serves as cofactor.

The protein resides in the golgi apparatus membrane. It carries out the reaction CDP-choline + a 1,2-diacyl-sn-glycerol = a 1,2-diacyl-sn-glycero-3-phosphocholine + CMP + H(+). It catalyses the reaction 1,2-dioctanoyl-sn-glycerol + CDP-choline = 1,2-dioctanoyl-sn-glycero-3-phosphocholine + CMP + H(+). The enzyme catalyses 1-octadecanoyl-2-(5Z,8Z,11Z,14Z-eicosatetraenoyl)-sn-glycerol + CDP-choline = 1-octadecanoyl-2-(5Z,8Z,11Z,14Z-eicosatetraenoyl)-sn-glycero-3-phosphocholine + CMP + H(+). The catalysed reaction is 1-hexadecanoyl-2-(9Z-octadecenoyl)-sn-glycerol + CDP-choline = 1-hexadecanoyl-2-(9Z-octadecenoyl)-sn-glycero-3-phosphocholine + CMP + H(+). It carries out the reaction 1-hexadecanoyl-2-(4Z,7Z,10Z,13Z,16Z,19Z-docosahexaenoyl)-sn-glycerol + CDP-choline = 1-hexadecanoyl-2-(4Z,7Z,10Z,13Z,16Z,19Z-docosahexaenoyl)-sn-glycero-3-phosphocholine + CMP + H(+). The protein operates within phospholipid metabolism; phosphatidylcholine biosynthesis; phosphatidylcholine from phosphocholine: step 2/2. Catalyzes the final step of de novo phosphatidylcholine (PC) synthesis, i.e. the transfer of choline phosphate from CDP-choline to the free hydroxyl of a diacylglycerol (DAG), producing a PC. It thereby plays a central role in the formation and maintenance of vesicular membranes. Shows a high preference for CDP-choline over CDP-ethanolamine as substrate. The chain is Cholinephosphotransferase 1 (chpt1) from Xenopus laevis (African clawed frog).